We begin with the raw amino-acid sequence, 102 residues long: Small ribosomal subunit protein uS17 (102 aa).

The tract at residues 1–27 (MEQTEEHTDTHTDEQDEAVDRNDRKER) is disordered.

It belongs to the universal ribosomal protein uS17 family. Part of the 30S ribosomal subunit.

Functionally, one of the primary rRNA binding proteins, it binds specifically to the 5'-end of 16S ribosomal RNA. The chain is Small ribosomal subunit protein uS17 from Salinibacter ruber (strain DSM 13855 / M31).